We begin with the raw amino-acid sequence, 282 residues long: Bifunctional protein FolD (282 aa).

NADP(+) contacts are provided by residues 164–166 (GRS) and Ser189.

The protein belongs to the tetrahydrofolate dehydrogenase/cyclohydrolase family. Homodimer.

It carries out the reaction (6R)-5,10-methylene-5,6,7,8-tetrahydrofolate + NADP(+) = (6R)-5,10-methenyltetrahydrofolate + NADPH. The catalysed reaction is (6R)-5,10-methenyltetrahydrofolate + H2O = (6R)-10-formyltetrahydrofolate + H(+). It functions in the pathway one-carbon metabolism; tetrahydrofolate interconversion. Its function is as follows. Catalyzes the oxidation of 5,10-methylenetetrahydrofolate to 5,10-methenyltetrahydrofolate and then the hydrolysis of 5,10-methenyltetrahydrofolate to 10-formyltetrahydrofolate. This is Bifunctional protein FolD from Lactobacillus helveticus (strain DPC 4571).